Reading from the N-terminus, the 231-residue chain is Killer cell lectin-like receptor subfamily F member 1 (231 aa).

Residues 1–38 are Cytoplasmic-facing; that stretch reads MQDEERYMTLNVQSKKRTSTQTTQLTFKDYSVVLHWYK. A Phosphotyrosine modification is found at Tyr7. A helical; Signal-anchor for type II membrane protein membrane pass occupies residues 39 to 59; it reads ILLGISGTLNGILALALISLI. Residues 60-231 are Extracellular-facing; sequence LLVSQGVLLK…SSVFKWICQY (172 aa). Asn77, Asn91, Asn96, and Asn176 each carry an N-linked (GlcNAc...) asparagine glycan. In terms of domain architecture, C-type lectin spans 121 to 230; that stretch reads YRGKCYWFSN…CSSVFKWICQ (110 aa). Cystine bridges form between Cys142–Cys229 and Cys208–Cys221.

Homodimer. Interacts with CLEC2B. Post-translationally, phosphorylated on Tyr-7; this phosphorylation is required for NKp80/KLRF1-mediated cytotoxicity.

Its subcellular location is the membrane. In terms of biological role, functions as an activating receptor involved in immunosurveillance upon binding to various ligands displayed at the surface of myeloid cells. Upon interaction with CLEC2B ligand, stimulates NK-cell cytotoxicity and cytokine production leading to the cytolysis of malignant CLEC2B-expressing myeloid cells. Actviation of the common cytotoxicity pathway involves SRC and SYK kinases. This Macaca fascicularis (Crab-eating macaque) protein is Killer cell lectin-like receptor subfamily F member 1 (KLRF1).